The sequence spans 374 residues: Type II methyltransferase M.NgoFVII (374 aa).

The SAM-dependent MTase C5-type domain occupies 16 to 344 (PKILSLFSGC…KSILPIFSDN (329 aa)). Residue cysteine 88 is part of the active site.

This sequence belongs to the class I-like SAM-binding methyltransferase superfamily. C5-methyltransferase family.

It catalyses the reaction a 2'-deoxycytidine in DNA + S-adenosyl-L-methionine = a 5-methyl-2'-deoxycytidine in DNA + S-adenosyl-L-homocysteine + H(+). In terms of biological role, a methylase, recognizes the double-stranded sequence 5'-GCSGC-3', methylates C-5 on both strands, and protects the DNA from cleavage by the NgoFVII endonuclease. The protein is Type II methyltransferase M.NgoFVII (ngoFVIIM) of Neisseria gonorrhoeae.